Here is a 246-residue protein sequence, read N- to C-terminus: Probable chemoreceptor glutamine deamidase CheD (246 aa).

The segment at 225–246 (GAGVQPAVQKAASPYAANLSRK) is disordered.

The protein belongs to the CheD family.

It carries out the reaction L-glutaminyl-[protein] + H2O = L-glutamyl-[protein] + NH4(+). Its function is as follows. Probably deamidates glutamine residues to glutamate on methyl-accepting chemotaxis receptors (MCPs), playing an important role in chemotaxis. This is Probable chemoreceptor glutamine deamidase CheD from Burkholderia vietnamiensis (strain G4 / LMG 22486) (Burkholderia cepacia (strain R1808)).